We begin with the raw amino-acid sequence, 160 residues long: Ribosomal RNA large subunit methyltransferase H (160 aa).

Residues leucine 77, glycine 109, and 128-133 (FSRLTF) each bind S-adenosyl-L-methionine.

It belongs to the RNA methyltransferase RlmH family. As to quaternary structure, homodimer.

It localises to the cytoplasm. The catalysed reaction is pseudouridine(1915) in 23S rRNA + S-adenosyl-L-methionine = N(3)-methylpseudouridine(1915) in 23S rRNA + S-adenosyl-L-homocysteine + H(+). Specifically methylates the pseudouridine at position 1915 (m3Psi1915) in 23S rRNA. The protein is Ribosomal RNA large subunit methyltransferase H of Desulfitobacterium hafniense (strain Y51).